The following is a 935-amino-acid chain: Isoleucine--tRNA ligase (935 aa).

Residues 58–68 (PYANGSIHVGH) carry the 'HIGH' region motif. Residue E558 participates in L-isoleucyl-5'-AMP binding. A 'KMSKS' region motif is present at residues 599 to 603 (KMSKS). Residue K602 coordinates ATP. Zn(2+)-binding residues include C897, C900, C917, and C920.

It belongs to the class-I aminoacyl-tRNA synthetase family. IleS type 1 subfamily. As to quaternary structure, monomer. Zn(2+) serves as cofactor.

Its subcellular location is the cytoplasm. The catalysed reaction is tRNA(Ile) + L-isoleucine + ATP = L-isoleucyl-tRNA(Ile) + AMP + diphosphate. Catalyzes the attachment of isoleucine to tRNA(Ile). As IleRS can inadvertently accommodate and process structurally similar amino acids such as valine, to avoid such errors it has two additional distinct tRNA(Ile)-dependent editing activities. One activity is designated as 'pretransfer' editing and involves the hydrolysis of activated Val-AMP. The other activity is designated 'posttransfer' editing and involves deacylation of mischarged Val-tRNA(Ile). The polypeptide is Isoleucine--tRNA ligase (Francisella tularensis subsp. mediasiatica (strain FSC147)).